A 139-amino-acid polypeptide reads, in one-letter code: MPIHLEIVTAERVILSDDVDMISAPTKDGRVGILPRHAPLMTILEPGELDIIKNGERTPFAVSGGFMEVLPHRVTILADTVERADEIDEARAEQARAEAEARRREAQSERDMALAEAKLRKEMVRLRVAQLHKIKRRQS.

Residues 89-110 (EARAEQARAEAEARRREAQSER) are disordered.

This sequence belongs to the ATPase epsilon chain family. F-type ATPases have 2 components, CF(1) - the catalytic core - and CF(0) - the membrane proton channel. CF(1) has five subunits: alpha(3), beta(3), gamma(1), delta(1), epsilon(1). CF(0) has three main subunits: a, b and c.

It localises to the cell membrane. Functionally, produces ATP from ADP in the presence of a proton gradient across the membrane. This Chloroflexus aurantiacus (strain ATCC 29366 / DSM 635 / J-10-fl) protein is ATP synthase epsilon chain.